Here is a 963-residue protein sequence, read N- to C-terminus: Importin-13 (963 aa).

HEAT repeat units follow at residues 24 to 54 (ENVEKALHQLYYDPNIENKNLAQKWLMQAQV), 56 to 88 (PQAWHFSWQLLQPDKVPEIQYFGASALHIKISR), 95 to 135 (TDQY…LSMM), 142 to 179 (AVADMVRLFQAEDSPVDSQGRCLALLELLTVLPEEFQT), 194 to 231 (LAVECGAVFPLLEQLLQQPSSPSCVRQKVLKCFSSWVQ), 236 to 268 (LQDCEALIQAAFAALQDSELFDSSVEAIVNAIS), 276 to 325 (VNTL…ALLD), 330 to 372 (WQSF…DDIL), 375 to 438 (EAEK…YEML), 440 to 476 (AELLSNLYDKLGRLLTSSEEPYSWQHTEALLYGFQSI), 487 to 522 (VVPGLIGLIPRISISNVQLADTVMFTIGALSEWLAD), 524 to 558 (PVMINSVLPLVLHALGNPELSVSSVSTLKKICREC), 562 to 600 (LPPYAANIVAVSQDVLMKQIHKTSQCMWLMQALGFLLSA), 603 to 648 (VEEN…SNLF), 676 to 716 (PVVV…VKTL), 720 to 754 (FAPMVPQLCEMLGRMYSTVPQASALDLTRQLVHIF), 761 to 803 (FPPI…ALKR), 815 to 845 (VKAVFQCAVLALKFPEAPTVKASCGFFTELL), 860 to 893 (EDGRMLLIAVLEAIGGQASRSLMDCFADILFALN), and 897 to 931 (FSLLSMWIKEALQPPGFPSARLSPEQKDTFSQQIL). One can recognise an Importin N-terminal domain in the interval 45–111 (AQKWLMQAQV…KAHSFTQITR (67 aa)).

Belongs to the importin beta family. Interacts with UBC9, RAN, RBM8A, eIF-1A and PAX6. In terms of tissue distribution, expressed in fetal brain, heart, intestine and kidney.

It localises to the cytoplasm. It is found in the nucleus. Functionally, functions in nuclear protein import as nuclear transport receptor. Serves as receptor for nuclear localization signals (NLS) in cargo substrates. Is thought to mediate docking of the importin/substrate complex to the nuclear pore complex (NPC) through binding to nucleoporin and the complex is subsequently translocated through the pore by an energy requiring, Ran-dependent mechanism. At the nucleoplasmic side of the NPC, Ran binds to the importin, the importin/substrate complex dissociates and importin is re-exported from the nucleus to the cytoplasm where GTP hydrolysis releases Ran. The directionality of nuclear import is thought to be conferred by an asymmetric distribution of the GTP- and GDP-bound forms of Ran between the cytoplasm and nucleus. Mediates the nuclear import of UBC9, the RBM8A/MAGOH complex, PAX6 and probably other members of the paired homeobox family. Also mediates nuclear export of eIF-1A, and the cytoplasmic release of eIF-1A is triggered by the loading of import substrates onto IPO13. This is Importin-13 (Ipo13) from Rattus norvegicus (Rat).